Reading from the N-terminus, the 480-residue chain is Ribulose bisphosphate carboxylase large chain (480 aa).

A propeptide spanning residues 1 to 2 is cleaved from the precursor; it reads MS. Pro3 is subject to N-acetylproline. Residue Lys14 is modified to N6,N6,N6-trimethyllysine. Residues Asn123 and Thr173 each contribute to the substrate site. Lys175 serves as the catalytic Proton acceptor. Lys177 serves as a coordination point for substrate. The Mg(2+) site is built by Lys201, Asp203, and Glu204. Lys201 carries the N6-carboxylysine modification. The Proton acceptor role is filled by His294. Positions 295, 327, and 379 each coordinate substrate.

Belongs to the RuBisCO large chain family. Type I subfamily. As to quaternary structure, heterohexadecamer of 8 large chains and 8 small chains; disulfide-linked. The disulfide link is formed within the large subunit homodimers. It depends on Mg(2+) as a cofactor. In terms of processing, the disulfide bond which can form in the large chain dimeric partners within the hexadecamer appears to be associated with oxidative stress and protein turnover.

The protein localises to the plastid. Its subcellular location is the chloroplast. The catalysed reaction is 2 (2R)-3-phosphoglycerate + 2 H(+) = D-ribulose 1,5-bisphosphate + CO2 + H2O. It catalyses the reaction D-ribulose 1,5-bisphosphate + O2 = 2-phosphoglycolate + (2R)-3-phosphoglycerate + 2 H(+). RuBisCO catalyzes two reactions: the carboxylation of D-ribulose 1,5-bisphosphate, the primary event in carbon dioxide fixation, as well as the oxidative fragmentation of the pentose substrate in the photorespiration process. Both reactions occur simultaneously and in competition at the same active site. The polypeptide is Ribulose bisphosphate carboxylase large chain (Rivina humilis (Rougeplant)).